The sequence spans 192 residues: MIVIVDYGLGNISNVKRAIEHLGYEVVVSNTSKIIDQAETIILPGVGHFKDAMSEIKRLNLNAILAKNTDKKMIGICLGMQLMYEHSDEGDASGLGFIPGNISRIQTEYPVPHLGWNNLVSKHPMLNQDVYFVHSYQAPMSENVIAYAQYGADIPAIVQFNNYIGIQFHPEKSGTYGLQILRQAIQGGFIND.

Residues 1 to 192 (MIVIVDYGLG…QAIQGGFIND (192 aa)) enclose the Glutamine amidotransferase type-1 domain. C77 functions as the Nucleophile in the catalytic mechanism. Catalysis depends on residues H169 and E171.

In terms of assembly, heterodimer of HisH and HisF.

The protein resides in the cytoplasm. The enzyme catalyses 5-[(5-phospho-1-deoxy-D-ribulos-1-ylimino)methylamino]-1-(5-phospho-beta-D-ribosyl)imidazole-4-carboxamide + L-glutamine = D-erythro-1-(imidazol-4-yl)glycerol 3-phosphate + 5-amino-1-(5-phospho-beta-D-ribosyl)imidazole-4-carboxamide + L-glutamate + H(+). It carries out the reaction L-glutamine + H2O = L-glutamate + NH4(+). It functions in the pathway amino-acid biosynthesis; L-histidine biosynthesis; L-histidine from 5-phospho-alpha-D-ribose 1-diphosphate: step 5/9. In terms of biological role, IGPS catalyzes the conversion of PRFAR and glutamine to IGP, AICAR and glutamate. The HisH subunit catalyzes the hydrolysis of glutamine to glutamate and ammonia as part of the synthesis of IGP and AICAR. The resulting ammonia molecule is channeled to the active site of HisF. The sequence is that of Imidazole glycerol phosphate synthase subunit HisH from Staphylococcus aureus (strain COL).